A 434-amino-acid chain; its full sequence is MNAEDVKGFFASRESLDMEQYLVRDYYLECVGDIETALAHFCSEQSTAQWKRVGVDEDFRPMHAAKVIDYDVIEELEQLSYPVKHSETGKIHACRVTIAHPHCNFGPKIPNLLTAVCGEGTYFTPGVPVVKLMDIHFPDIYLADFEGPKFGIDGLRNILNAHGRPIFFGVVKPNIGLSPEEFSEIAYQSWLGGLDIAKDDEMLADVTWSSIEERAAHLGKARRKAEAETGEPKIYLANITDEVDSLMEKHDIAVRNGANALLINALPVGLSAVRMLSNYTQVPLIGHFPFIASFSRMEKYGIRSKVMTKLQRLAGLDVVIMPGFGDRMMTPEEEVVENVIECTKPMGRIKPCLPVPGGSDSALTLGTVWRKVGSVDFGFVPGRGVFGHPMGPRAGAKSIRQAWEAIEQGISIETWAETHPELQAMIDQSALKKQ.

Lysine 198, aspartate 200, and glutamate 201 together coordinate Mg(2+). Residue lysine 198 is modified to N6-carboxylysine.

The protein belongs to the RuBisCO large chain family. Type IV subfamily. In terms of assembly, homodimer. Requires Mg(2+) as cofactor.

Its function is as follows. May be involved in sulfur metabolism and oxidative stress response. Does not show RuBisCO activity. This chain is Ribulose bisphosphate carboxylase-like protein, found in Chlorobaculum thiosulfatiphilum (Chlorobium limicola f.sp. thiosulfatophilum).